The sequence spans 410 residues: Peptidase T (410 aa).

His77 is a Zn(2+) binding site. Residue Asp79 is part of the active site. Asp140 lines the Zn(2+) pocket. Glu174 functions as the Proton acceptor in the catalytic mechanism. Zn(2+) is bound by residues Glu175, Asp197, and His379.

The protein belongs to the peptidase M20B family. Requires Zn(2+) as cofactor.

It is found in the cytoplasm. It catalyses the reaction Release of the N-terminal residue from a tripeptide.. Cleaves the N-terminal amino acid of tripeptides. The polypeptide is Peptidase T (Desulfitobacterium hafniense (strain DSM 10664 / DCB-2)).